We begin with the raw amino-acid sequence, 63 residues long: Large ribosomal subunit protein bL28 (63 aa).

It belongs to the bacterial ribosomal protein bL28 family.

The polypeptide is Large ribosomal subunit protein bL28 (rpmB) (Selenomonas ruminantium).